Reading from the N-terminus, the 176-residue chain is Ribosome rescue factor SmrB (176 aa).

The tract at residues 29–51 (TIIQQPKKNTKQKEIKRSNREAS) is disordered. A compositionally biased stretch (basic and acidic residues) spans 39-51 (KQKEIKRSNREAS). Residues 97 to 172 (LDMHGMTQQE…GDGALLVLLS (76 aa)) enclose the Smr domain.

It belongs to the SmrB family. In terms of assembly, associates with collided ribosomes, but not with correctly translating polysomes.

In terms of biological role, acts as a ribosome collision sensor. Detects stalled/collided disomes (pairs of ribosomes where the leading ribosome is stalled and a second ribosome has collided with it) and endonucleolytically cleaves mRNA at the 5' boundary of the stalled ribosome. Stalled/collided disomes form a new interface (primarily via the 30S subunits) that binds SmrB. Cleaved mRNA becomes available for tmRNA ligation, leading to ribosomal subunit dissociation and rescue of stalled ribosomes. This chain is Ribosome rescue factor SmrB, found in Vibrio parahaemolyticus serotype O3:K6 (strain RIMD 2210633).